The primary structure comprises 69 residues: uncharacterized protein (69 aa).

Positions 23–46 are disordered; it reads AENEGNRKENRRQMQSRNERGCNV. The segment covering 26–44 has biased composition (basic and acidic residues); that stretch reads EGNRKENRRQMQSRNERGC.

This is an uncharacterized protein from Homo sapiens (Human).